A 367-amino-acid polypeptide reads, in one-letter code: uncharacterized protein (367 aa).

Residues 6–26 traverse the membrane as a helical segment; the sequence is IAAGVVVALAAVWCTSAWFTG.

To E.coli YdgA and YihF.

Its subcellular location is the membrane. This is an uncharacterized protein from Haemophilus influenzae (strain ATCC 51907 / DSM 11121 / KW20 / Rd).